The following is a 593-amino-acid chain: Transmembrane 9 superfamily member 4 (593 aa).

The first 25 residues, Met-1 to Ser-25, serve as a signal peptide directing secretion. Over Asp-26–Trp-230 the chain is Lumenal. Residues Phe-231 to Leu-251 traverse the membrane as a helical segment. The Cytoplasmic portion of the chain corresponds to Met-252 to Gln-303. The helical transmembrane segment at Leu-304–Asn-324 threads the bilayer. Over Arg-325–Gly-326 the chain is Lumenal. Residues Ala-327–Ala-347 form a helical membrane-spanning segment. The Cytoplasmic segment spans residues Ala-348–Thr-366. Residues Gly-367–Ala-387 traverse the membrane as a helical segment. Residues Tyr-388–Thr-398 lie on the Lumenal side of the membrane. Residues Ile-399 to Ile-419 traverse the membrane as a helical segment. At Ala-420 to Gln-453 the chain is on the cytoplasmic side. Residues Met-454–Ala-474 form a helical membrane-spanning segment. Residues Ser-475 to Ser-486 lie on the Lumenal side of the membrane. A helical membrane pass occupies residues Ile-487–Thr-507. Over Tyr-508–Ser-522 the chain is Cytoplasmic. The helical transmembrane segment at Leu-523–Ala-543 threads the bilayer. The Lumenal portion of the chain corresponds to Arg-544–Ser-554. The chain crosses the membrane as a helical span at residues Phe-555–Gly-575. Residues Phe-576–Glu-593 are Cytoplasmic-facing. Positions Phe-582–Tyr-587 match the Endoplasmic reticulum export signal motif. A Golgi retention signal motif is present at residues Lys-591–Glu-593.

Belongs to the nonaspanin (TM9SF) (TC 9.A.2) family.

The protein localises to the endosome membrane. Its subcellular location is the golgi apparatus membrane. The polypeptide is Transmembrane 9 superfamily member 4 (Arabidopsis thaliana (Mouse-ear cress)).